Here is a 115-residue protein sequence, read N- to C-terminus: Putative UPF0377 protein YHL045W (115 aa).

Residues 10 to 30 (ACIFIDSVCEGIVFWGLCLFV) form a helical membrane-spanning segment.

Belongs to the UPF0377 family.

The protein localises to the membrane. This Saccharomyces cerevisiae (strain ATCC 204508 / S288c) (Baker's yeast) protein is Putative UPF0377 protein YHL045W.